The primary structure comprises 312 residues: Malate dehydrogenase (312 aa).

NAD(+) is bound by residues 12 to 17 (GAGFTG) and Asp36. Positions 87 and 93 each coordinate substrate. NAD(+)-binding positions include Asn100 and 123–125 (LTN). Asn125 contacts substrate. Ser149 bears the Phosphoserine mark. Arg156 is a binding site for substrate. His180 functions as the Proton acceptor in the catalytic mechanism.

Belongs to the LDH/MDH superfamily. MDH type 3 family.

It carries out the reaction (S)-malate + NAD(+) = oxaloacetate + NADH + H(+). Its function is as follows. Catalyzes the reversible oxidation of malate to oxaloacetate. The chain is Malate dehydrogenase from Bacillus cereus (strain ZK / E33L).